The chain runs to 289 residues: Glyceraldehyde-3-phosphate dehydrogenase (289 aa).

Residues aspartate 12 and arginine 57 each coordinate NAD(+). Residues 128–130 (SCT), threonine 159, 188–189 (TG), and arginine 211 contribute to the D-glyceraldehyde 3-phosphate site. Cysteine 129 serves as the catalytic Nucleophile.

This sequence belongs to the glyceraldehyde-3-phosphate dehydrogenase family. In terms of assembly, homotetramer.

Its subcellular location is the cytoplasm. It catalyses the reaction D-glyceraldehyde 3-phosphate + phosphate + NAD(+) = (2R)-3-phospho-glyceroyl phosphate + NADH + H(+). It functions in the pathway carbohydrate degradation; glycolysis; pyruvate from D-glyceraldehyde 3-phosphate: step 1/5. This Amanita muscaria (Fly agaric) protein is Glyceraldehyde-3-phosphate dehydrogenase (GPD).